The sequence spans 1399 residues: DNA-directed RNA polymerase subunit beta' (1399 aa).

4 residues coordinate Zn(2+): Cys-70, Cys-72, Cys-85, and Cys-88. Positions 460, 462, and 464 each coordinate Mg(2+). Residues Cys-814, Cys-888, Cys-895, and Cys-898 each coordinate Zn(2+).

It belongs to the RNA polymerase beta' chain family. The RNAP catalytic core consists of 2 alpha, 1 beta, 1 beta' and 1 omega subunit. When a sigma factor is associated with the core the holoenzyme is formed, which can initiate transcription. The cofactor is Mg(2+). Zn(2+) is required as a cofactor.

It catalyses the reaction RNA(n) + a ribonucleoside 5'-triphosphate = RNA(n+1) + diphosphate. In terms of biological role, DNA-dependent RNA polymerase catalyzes the transcription of DNA into RNA using the four ribonucleoside triphosphates as substrates. This Pseudomonas putida (strain GB-1) protein is DNA-directed RNA polymerase subunit beta'.